Reading from the N-terminus, the 248-residue chain is MSFVVIIPARYASTRLPGKPLVDINGKPMIVHVLERARESGADRIIVATDHEDVARAVEAAGGEVCMTRADHQSGTERLAEVVEKCAFSDDTVIVNVQGDEPMIPATIIRQVADNLAQRQVGMATLAVPIHNAEEAFNPNAVKVVLDAEGYALYFSRATIPWERDRFAKGLETVGDNFLRHLGIYGYRAGFIRRYVTWQPSPLEHIEMLEQLRVLWYGEKIHVAVAHEVPGTGVDTPEDLERVRAEMR.

The protein belongs to the KdsB family.

It localises to the cytoplasm. It catalyses the reaction 3-deoxy-alpha-D-manno-oct-2-ulosonate + CTP = CMP-3-deoxy-beta-D-manno-octulosonate + diphosphate. It functions in the pathway nucleotide-sugar biosynthesis; CMP-3-deoxy-D-manno-octulosonate biosynthesis; CMP-3-deoxy-D-manno-octulosonate from 3-deoxy-D-manno-octulosonate and CTP: step 1/1. The protein operates within bacterial outer membrane biogenesis; lipopolysaccharide biosynthesis. Activates KDO (a required 8-carbon sugar) for incorporation into bacterial lipopolysaccharide in Gram-negative bacteria. This chain is 3-deoxy-manno-octulosonate cytidylyltransferase, found in Shigella dysenteriae serotype 1 (strain Sd197).